A 442-amino-acid polypeptide reads, in one-letter code: tRNA-2-methylthio-N(6)-dimethylallyladenosine synthase (442 aa).

The region spanning 2-120 (KKVFIRTFGC…LPKMIVDKET (119 aa)) is the MTTase N-terminal domain. The [4Fe-4S] cluster site is built by C11, C49, C83, C157, C161, and C164. One can recognise a Radical SAM core domain in the interval 143-375 (RVEGGAAFVS…NEVIEAETAR (233 aa)). Residues 378–441 (QTMIGTVQRC…TFSLRGKIVE (64 aa)) form the TRAM domain.

This sequence belongs to the methylthiotransferase family. MiaB subfamily. As to quaternary structure, monomer. [4Fe-4S] cluster serves as cofactor.

Its subcellular location is the cytoplasm. The catalysed reaction is N(6)-dimethylallyladenosine(37) in tRNA + (sulfur carrier)-SH + AH2 + 2 S-adenosyl-L-methionine = 2-methylsulfanyl-N(6)-dimethylallyladenosine(37) in tRNA + (sulfur carrier)-H + 5'-deoxyadenosine + L-methionine + A + S-adenosyl-L-homocysteine + 2 H(+). Catalyzes the methylthiolation of N6-(dimethylallyl)adenosine (i(6)A), leading to the formation of 2-methylthio-N6-(dimethylallyl)adenosine (ms(2)i(6)A) at position 37 in tRNAs that read codons beginning with uridine. The sequence is that of tRNA-2-methylthio-N(6)-dimethylallyladenosine synthase from Neisseria meningitidis serogroup A / serotype 4A (strain DSM 15465 / Z2491).